A 686-amino-acid chain; its full sequence is Cation channel sperm-associated protein 1 (686 aa).

Residues methionine 1–histidine 15 are compositionally biased toward basic and acidic residues. Disordered regions lie at residues methionine 1–tyrosine 57, threonine 97–histidine 177, aspartate 207–alanine 271, and glutamine 289–lysine 318. Residues methionine 1–leucine 351 lie on the Cytoplasmic side of the membrane. Residues serine 25 to leucine 35 are compositionally biased toward basic residues. A compositionally biased stretch (basic and acidic residues) spans aspartate 128 to serine 142. Positions histidine 147 to glutamine 160 are enriched in polar residues. Basic residues-rich tracts occupy residues glutamate 211–arginine 229 and histidine 235–serine 244. Residues proline 245–alanine 271 are compositionally biased toward polar residues. A compositionally biased stretch (basic residues) spans glutamine 308–lysine 318. Residues glycine 352 to phenylalanine 373 traverse the membrane as a helical segment. At threonine 374–tryptophan 382 the chain is on the extracellular side. Residues tyrosine 383–isoleucine 404 traverse the membrane as a helical segment. Residues alanine 405–tyrosine 412 lie on the Cytoplasmic side of the membrane. Residues aspartate 413–isoleucine 435 traverse the membrane as a helical segment. Topologically, residues asparagine 436–serine 446 are extracellular. Residues leucine 447 to leucine 469 traverse the membrane as a helical segment. Residues serine 470–proline 487 lie on the Cytoplasmic side of the membrane. A helical transmembrane segment spans residues serine 488–leucine 510. The Extracellular portion of the chain corresponds to phenylalanine 511–asparagine 521. An intramembrane region (helical; Pore-forming) is located at residues isoleucine 522–threonine 534. The Extracellular segment spans residues leucine 535–tryptophan 551. A helical transmembrane segment spans residues tyrosine 552–valine 577. Over aspartate 578–lysine 686 the chain is Cytoplasmic.

It belongs to the cation channel sperm-associated (TC 1.A.1.19) family. Component of the CatSper complex or CatSpermasome composed of the core pore-forming members CATSPER1, CATSPER2, CATSPER3 and CATSPER4 as well as auxiliary members CATSPERB, CATSPERG2, CATSPERD, CATSPERE, CATSPERZ, C2CD6/CATSPERT, SLCO6C1, TMEM249, TMEM262 and EFCAB9. HSPA1 may be an additional auxiliary complex member. The core complex members CATSPER1, CATSPER2, CATSPER3 and CATSPER4 form a heterotetrameric channel. The auxiliary CATSPERB, CATSPERG2, CATSPERD and CATSPERE subunits form a pavilion-like structure over the pore which stabilizes the complex through interactions with CATSPER4, CATSPER3, CATSPER1 and CATSPER2 respectively. SLCO6C1 interacts with CATSPERE, and TMEM262/CATSPERH interacts with CATSPERB, further stabilizing the complex. C2CD6/CATSPERT interacts at least with CATSPERD and is required for targeting the CatSper complex in the flagellar membrane. Interacts with Ca(v)3.3/CACNA1I, leading to suppression of T-type calcium channel activity. In terms of tissue distribution, testis-specific.

It is found in the cell projection. The protein resides in the cilium. Its subcellular location is the flagellum membrane. The enzyme catalyses Ca(2+)(in) = Ca(2+)(out). Its activity is regulated as follows. Activated by intracellular alkalinization. In contrast to the human ortholog, not activated by progesterone. Functionally, pore-forming subunit of the CatSper complex, a sperm-specific voltage-gated calcium channel that plays a central role in sperm cell hyperactivation. Controls calcium entry to mediate the hyperactivated motility, a step needed for sperm motility which is essential late in the preparation of sperm for fertilization. This Mus musculus (Mouse) protein is Cation channel sperm-associated protein 1 (Catsper1).